Reading from the N-terminus, the 228-residue chain is L-ribulose-5-phosphate 4-epimerase UlaF (228 aa).

Substrate contacts are provided by residues 26-27 (GN), 43-44 (SG), and 72-73 (SS). Aspartate 74, histidine 93, and histidine 95 together coordinate Zn(2+). Aspartate 118 serves as the catalytic Proton donor/acceptor. Residue histidine 167 coordinates Zn(2+). Catalysis depends on tyrosine 225, which acts as the Proton donor/acceptor.

The protein belongs to the aldolase class II family. AraD/FucA subfamily. The cofactor is Zn(2+).

It catalyses the reaction L-ribulose 5-phosphate = D-xylulose 5-phosphate. It functions in the pathway cofactor degradation; L-ascorbate degradation; D-xylulose 5-phosphate from L-ascorbate: step 4/4. Functionally, catalyzes the isomerization of L-ribulose 5-phosphate to D-xylulose 5-phosphate. Is involved in the anaerobic L-ascorbate utilization. This is L-ribulose-5-phosphate 4-epimerase UlaF from Escherichia coli O139:H28 (strain E24377A / ETEC).